A 214-amino-acid polypeptide reads, in one-letter code: Probable transaldolase (214 aa).

Catalysis depends on lysine 83, which acts as the Schiff-base intermediate with substrate.

The protein belongs to the transaldolase family. Type 3B subfamily.

The protein localises to the cytoplasm. It carries out the reaction D-sedoheptulose 7-phosphate + D-glyceraldehyde 3-phosphate = D-erythrose 4-phosphate + beta-D-fructose 6-phosphate. Its pathway is carbohydrate degradation; pentose phosphate pathway; D-glyceraldehyde 3-phosphate and beta-D-fructose 6-phosphate from D-ribose 5-phosphate and D-xylulose 5-phosphate (non-oxidative stage): step 2/3. Its function is as follows. Transaldolase is important for the balance of metabolites in the pentose-phosphate pathway. This is Probable transaldolase from Leptospira borgpetersenii serovar Hardjo-bovis (strain JB197).